We begin with the raw amino-acid sequence, 215 residues long: Probable phosphoglycerate mutase GpmB (215 aa).

Substrate-binding positions include 8–15 (RHGETQWN), 21–22 (QG), Arg-58, Arg-60, 82–85 (ELNM), 104–105 (RR), and 151–152 (GI). Residue His-9 is the Tele-phosphohistidine intermediate of the active site. Residue Glu-82 is the Proton donor/acceptor of the active site.

Belongs to the phosphoglycerate mutase family. GpmB subfamily.

It carries out the reaction (2R)-2-phosphoglycerate = (2R)-3-phosphoglycerate. It functions in the pathway carbohydrate degradation; glycolysis; pyruvate from D-glyceraldehyde 3-phosphate: step 3/5. The sequence is that of Probable phosphoglycerate mutase GpmB from Shigella boydii serotype 18 (strain CDC 3083-94 / BS512).